Reading from the N-terminus, the 1376-residue chain is Mediator of RNA polymerase II transcription subunit 23 (1376 aa).

Residues 1346 to 1369 (SNSSSVQQTSSASSPTAQSTAGAA) are compositionally biased toward low complexity. Residues 1346-1376 (SNSSSVQQTSSASSPTAQSTAGAAIPLSVTQ) form a disordered region.

This sequence belongs to the Mediator complex subunit 23 family. As to quaternary structure, component of the Mediator complex.

It localises to the nucleus. Component of the Mediator complex, a coactivator involved in the regulated transcription of nearly all RNA polymerase II-dependent genes. Mediator functions as a bridge to convey information from gene-specific regulatory proteins to the basal RNA polymerase II transcription machinery. Mediator is recruited to promoters by direct interactions with regulatory proteins and serves as a scaffold for the assembly of a functional preinitiation complex with RNA polymerase II and the general transcription factors. The chain is Mediator of RNA polymerase II transcription subunit 23 (med23) from Danio rerio (Zebrafish).